A 149-amino-acid polypeptide reads, in one-letter code: Large ribosomal subunit protein bL9 (149 aa).

The protein belongs to the bacterial ribosomal protein bL9 family.

Its function is as follows. Binds to the 23S rRNA. The protein is Large ribosomal subunit protein bL9 of Klebsiella pneumoniae (strain 342).